Reading from the N-terminus, the 593-residue chain is Mitochondrial sodium/calcium exchanger protein (593 aa).

The N-terminal stretch at 1–20 is a signal peptide; the sequence is MGPLWALRVAGALSVAGVLA. The Extracellular segment spans residues 21–93; the sequence is GHDGSQRAGQ…GAFCTFPSSL (73 aa). N-linked (GlcNAc...) asparagine glycosylation occurs at Asn58. Residues 94-114 form a helical membrane-spanning segment; the sequence is LPLSVSLYALWLLYLFVILGV. The Cytoplasmic segment spans residues 115–135; sequence TAEKFFCPNLSAISTNLKLSH. Residues 136-158 form a helical membrane-spanning segment; sequence NGLGVVGHSLTPALHGVTFLAFG. Residues 159-178 lie on the Extracellular side of the membrane; sequence NGAPDIFSAVVAFSDPRTAG. A helical membrane pass occupies residues 179 to 199; that stretch reads LAVGAIFGAGIFVTTVVAGGI. Over 200 to 215 the chain is Cytoplasmic; the sequence is ALVKPFAAASRPFLRD. The helical transmembrane segment at 216–236 threads the bilayer; that stretch reads VIFYMVAVFLTFLVLYFGYIT. Residues 237–239 lie on the Extracellular side of the membrane; that stretch reads LGE. A helical membrane pass occupies residues 240-260; the sequence is ALGYLGLYVFYVFTVVLCTWI. The Cytoplasmic portion of the chain corresponds to 261 to 334; the sequence is HRWQRGDGPP…KWRRKPWYWR (74 aa). Pro residues predominate over residues 268-277; that stretch reads GPPPPGPWEP. The disordered stretch occupies residues 268–291; the sequence is GPPPPGPWEPAIPTDAEEQESSGT. Residues 335–355 form a helical membrane-spanning segment; the sequence is LFKVLKVPVELVLLLTVPVVD. The Extracellular portion of the chain corresponds to 356-369; it reads PDKDDLNWKRPLNC. A helical transmembrane segment spans residues 370–390; that stretch reads LHIVTGPLLCIFTLKSGAYGL. Over 391 to 395 the chain is Cytoplasmic; the sequence is YQIQG. The helical transmembrane segment at 396-416 threads the bilayer; the sequence is VFPVWALVALAGSVLAIIVFV. Residues 417–428 lie on the Extracellular side of the membrane; sequence TTHNEEPPKYHC. A helical membrane pass occupies residues 429-449; that stretch reads VFAFLGFLSSAMWINAAATEL. The Cytoplasmic segment spans residues 450–454; sequence VNILR. Residues 455 to 475 form a helical membrane-spanning segment; that stretch reads TLGIIFELSNTVLGLTLLAWG. The Extracellular portion of the chain corresponds to 476–496; it reads NSIGDTFSDLTMARQGYPRMA. A helical transmembrane segment spans residues 497 to 517; the sequence is FSACFGGIIFNILVGVGLGCL. The Cytoplasmic portion of the chain corresponds to 518-533; sequence LQMTNSQMVVKLEPDS. Residues 534–554 form a helical membrane-spanning segment; it reads LLVWILAGALGLSLVFSFVAV. The Extracellular portion of the chain corresponds to 555–564; that stretch reads PAQCFQLGKA. A helical transmembrane segment spans residues 565 to 585; sequence YGTCLILYYLVFLCVALLTEF. Over 586–593 the chain is Cytoplasmic; the sequence is RVIHLAAT.

This sequence belongs to the Ca(2+):cation antiporter (CaCA) (TC 2.A.19) family. SLC24A subfamily.

Its subcellular location is the mitochondrion inner membrane. The enzyme catalyses Ca(2+)(in) + 3 Na(+)(out) = Ca(2+)(out) + 3 Na(+)(in). Mitochondrial sodium/calcium antiporter that mediates sodium-dependent calcium efflux from mitochondrion, by mediating the exchange of 3 sodium ions per 1 calcium ion. Plays a central role in mitochondrial calcium homeostasis by mediating mitochondrial calcium extrusion: calcium efflux is essential for mitochondrial function and cell survival, notably in cardiomyocytes. Involved in B-lymphocyte chemotaxis. In Gallus gallus (Chicken), this protein is Mitochondrial sodium/calcium exchanger protein.